The sequence spans 718 residues: Catalase (718 aa).

Catalysis depends on residues histidine 103 and asparagine 176. Residue tyrosine 390 coordinates heme.

The protein belongs to the catalase family. Requires heme as cofactor.

It localises to the peroxisome matrix. It catalyses the reaction 2 H2O2 = O2 + 2 H2O. In terms of biological role, catalyzes the degradation of hydrogen peroxide (H(2)O(2)) generated by peroxisomal oxidases to water and oxygen, thereby protecting cells from the toxic effects of hydrogen peroxide. The protein is Catalase (CAT1) of Blumeria hordei (Barley powdery mildew).